Reading from the N-terminus, the 362-residue chain is Aminomethyltransferase (362 aa).

This sequence belongs to the GcvT family. In terms of assembly, the glycine cleavage system is composed of four proteins: P, T, L and H.

It catalyses the reaction N(6)-[(R)-S(8)-aminomethyldihydrolipoyl]-L-lysyl-[protein] + (6S)-5,6,7,8-tetrahydrofolate = N(6)-[(R)-dihydrolipoyl]-L-lysyl-[protein] + (6R)-5,10-methylene-5,6,7,8-tetrahydrofolate + NH4(+). Its function is as follows. The glycine cleavage system catalyzes the degradation of glycine. The protein is Aminomethyltransferase of Listeria innocua serovar 6a (strain ATCC BAA-680 / CLIP 11262).